The sequence spans 90 residues: DNA-directed RNA polymerase subunit Rpo11 (90 aa).

Belongs to the archaeal Rpo11/eukaryotic RPB11/RPC19 RNA polymerase subunit family. Part of the 13-subunit RNA polymerase complex.

Its subcellular location is the cytoplasm. It carries out the reaction RNA(n) + a ribonucleoside 5'-triphosphate = RNA(n+1) + diphosphate. Functionally, DNA-dependent RNA polymerase (RNAP) catalyzes the transcription of DNA into RNA using the four ribonucleoside triphosphates as substrates. The protein is DNA-directed RNA polymerase subunit Rpo11 of Sulfolobus acidocaldarius (strain ATCC 33909 / DSM 639 / JCM 8929 / NBRC 15157 / NCIMB 11770).